A 347-amino-acid chain; its full sequence is Terpene synthase 2 (347 aa).

Mg(2+) contacts are provided by D103, N247, S251, and E255. The D(D/E)XX(D/E) motif motif lies at 103–107; that stretch reads DDLLE. The NSE motif motif lies at 247–255; that stretch reads NDIFSLKKE. Residues 329–336 carry the WxxxxxRY motif motif; it reads WCSKSTRY.

The protein belongs to the terpene synthase family. Mg(2+) serves as cofactor.

In terms of biological role, terpene synthase that may be involved in the production of volatile terpenoids. Does not show detectable terpene products with either farnesyl diphosphate (FPP) or geranyl diphosphate (GPP). P.polycephalum has a unique biology and these volatile terpenoids could function in internal communication of P.polycephalum, to mark the territory that have been explored, or they may be involved in chemotaxis. The protein is Terpene synthase 2 of Physarum polycephalum (Slime mold).